The chain runs to 93 residues: Small ribosomal subunit protein uS19c (93 aa).

It belongs to the universal ribosomal protein uS19 family.

The protein resides in the plastid. Its subcellular location is the chloroplast. Functionally, protein S19 forms a complex with S13 that binds strongly to the 16S ribosomal RNA. In Lolium perenne (Perennial ryegrass), this protein is Small ribosomal subunit protein uS19c.